We begin with the raw amino-acid sequence, 347 residues long: Histidinol-phosphate aminotransferase (347 aa).

At Lys209 the chain carries N6-(pyridoxal phosphate)lysine.

It belongs to the class-II pyridoxal-phosphate-dependent aminotransferase family. Histidinol-phosphate aminotransferase subfamily. In terms of assembly, homodimer. Pyridoxal 5'-phosphate is required as a cofactor.

It catalyses the reaction L-histidinol phosphate + 2-oxoglutarate = 3-(imidazol-4-yl)-2-oxopropyl phosphate + L-glutamate. It functions in the pathway amino-acid biosynthesis; L-histidine biosynthesis; L-histidine from 5-phospho-alpha-D-ribose 1-diphosphate: step 7/9. The chain is Histidinol-phosphate aminotransferase from Geotalea uraniireducens (strain Rf4) (Geobacter uraniireducens).